Here is a 440-residue protein sequence, read N- to C-terminus: Chromosome partition protein MukF (440 aa).

A leucine-zipper region spans residues 208-236 (LSETSGTLRELQDTLDAAGDKLQANLLRI).

This sequence belongs to the MukF family. Interacts, and probably forms a ternary complex, with MukE and MukB via its C-terminal region. The complex formation is stimulated by calcium or magnesium. It is required for an interaction between MukE and MukB.

The protein resides in the cytoplasm. The protein localises to the nucleoid. Functionally, involved in chromosome condensation, segregation and cell cycle progression. May participate in facilitating chromosome segregation by condensation DNA from both sides of a centrally located replisome during cell division. Not required for mini-F plasmid partitioning. Probably acts via its interaction with MukB and MukE. Overexpression results in anucleate cells. It has a calcium binding activity. The protein is Chromosome partition protein MukF of Klebsiella pneumoniae (strain 342).